A 287-amino-acid chain; its full sequence is Troponin T, cardiac muscle (287 aa).

2 stretches are compositionally biased toward acidic residues: residues 1-31 and 44-59; these read MSDV…EEAG and EDGE…DGPV. 2 disordered regions span residues 1 to 85 and 124 to 208; these read MSDV…GERV and KDRI…EKKK. Residue S2 is modified to N-acetylserine. S2 is modified (phosphoserine; by CK2). Residues 66-79 are compositionally biased toward pro residues; it reads APGPFMPNLVPPKI. 2 stretches are compositionally biased toward basic and acidic residues: residues 124–173 and 192–208; these read KDRI…DEAR and QAER…EKKK. The residue at position 197 (S197) is a Phosphoserine; by PKC/PRKCA. T202 is subject to Phosphothreonine; by PKC/PRKCA and RAF1. T283 bears the Phosphothreonine; by PKC/PRKCA mark.

Belongs to the troponin T family. In terms of processing, phosphorylation at Thr-202 by PRKCA induces significant reduction in myofilament calcium sensitivity and actomyosin ATPase activity.

Functionally, troponin T is the tropomyosin-binding subunit of troponin, the thin filament regulatory complex which confers calcium-sensitivity to striated muscle actomyosin ATPase activity. In Ovis aries (Sheep), this protein is Troponin T, cardiac muscle (TNNT2).